The following is a 62-amino-acid chain: Beta-defensin 33 (62 aa).

Positions 1-20 (MRLLFLLFILLVCLAQTTSG) are cleaved as a signal peptide. Cystine bridges form between Cys30-Cys59, Cys37-Cys52, and Cys45-Cys60.

Belongs to the beta-defensin family.

Its subcellular location is the secreted. Its function is as follows. Has antibacterial activity. The chain is Beta-defensin 33 (Defb33) from Mus musculus (Mouse).